The primary structure comprises 153 residues: Arginine repressor (153 aa).

It belongs to the ArgR family.

The protein resides in the cytoplasm. The protein operates within amino-acid biosynthesis; L-arginine biosynthesis [regulation]. In terms of biological role, regulates arginine biosynthesis genes. This Syntrophomonas wolfei subsp. wolfei (strain DSM 2245B / Goettingen) protein is Arginine repressor.